Here is a 204-residue protein sequence, read N- to C-terminus: Methylthioribulose-1-phosphate dehydratase (204 aa).

His-96 and His-98 together coordinate Zn(2+).

This sequence belongs to the aldolase class II family. MtnB subfamily. The cofactor is Zn(2+).

The catalysed reaction is 5-(methylsulfanyl)-D-ribulose 1-phosphate = 5-methylsulfanyl-2,3-dioxopentyl phosphate + H2O. It participates in amino-acid biosynthesis; L-methionine biosynthesis via salvage pathway; L-methionine from S-methyl-5-thio-alpha-D-ribose 1-phosphate: step 2/6. Catalyzes the dehydration of methylthioribulose-1-phosphate (MTRu-1-P) into 2,3-diketo-5-methylthiopentyl-1-phosphate (DK-MTP-1-P). This chain is Methylthioribulose-1-phosphate dehydratase, found in Methylococcus capsulatus (strain ATCC 33009 / NCIMB 11132 / Bath).